The sequence spans 353 residues: Photosystem II protein D1 (353 aa).

The next 3 membrane-spanning stretches (helical) occupy residues 29 to 46 (YVGW…TATI), 118 to 133 (HFLI…EWEL), and 142 to 156 (WICV…AATA). A chlorophyll a-binding site is contributed by His-118. Position 126 (Tyr-126) interacts with pheophytin a. 2 residues coordinate [CaMn4O5] cluster: Asp-170 and Glu-189. Residues 197-218 (FHMLGVAGVFGGSLFSAMHGSL) traverse the membrane as a helical segment. His-198 is a chlorophyll a binding site. A quinone-binding positions include His-215 and 264–265 (SF). Residue His-215 coordinates Fe cation. His-272 is a binding site for Fe cation. The helical transmembrane segment at 274 to 288 (FLAAWPVVGIWFTSL) threads the bilayer. Residues His-332, Glu-333, Asp-342, and Ala-344 each contribute to the [CaMn4O5] cluster site. A propeptide spanning residues 345–353 (AVKAPSIIG) is cleaved from the precursor.

It belongs to the reaction center PufL/M/PsbA/D family. In terms of assembly, PSII is composed of 1 copy each of membrane proteins PsbA, PsbB, PsbC, PsbD, PsbE, PsbF, PsbH, PsbI, PsbJ, PsbK, PsbL, PsbM, PsbT, PsbX, PsbY, PsbZ, Psb30/Ycf12, peripheral proteins PsbO, CyanoQ (PsbQ), PsbU, PsbV and a large number of cofactors. It forms dimeric complexes. Requires The D1/D2 heterodimer binds P680, chlorophylls that are the primary electron donor of PSII, and subsequent electron acceptors. It shares a non-heme iron and each subunit binds pheophytin, quinone, additional chlorophylls, carotenoids and lipids. D1 provides most of the ligands for the Mn4-Ca-O5 cluster of the oxygen-evolving complex (OEC). There is also a Cl(-1) ion associated with D1 and D2, which is required for oxygen evolution. The PSII complex binds additional chlorophylls, carotenoids and specific lipids. as cofactor. In terms of processing, tyr-161 forms a radical intermediate that is referred to as redox-active TyrZ, YZ or Y-Z. Post-translationally, C-terminally processed by CtpA; processing is essential to allow assembly of the oxygen-evolving complex and thus photosynthetic growth.

The protein localises to the cellular thylakoid membrane. The catalysed reaction is 2 a plastoquinone + 4 hnu + 2 H2O = 2 a plastoquinol + O2. In terms of biological role, photosystem II (PSII) is a light-driven water:plastoquinone oxidoreductase that uses light energy to abstract electrons from H(2)O, generating O(2) and a proton gradient subsequently used for ATP formation. It consists of a core antenna complex that captures photons, and an electron transfer chain that converts photonic excitation into a charge separation. The D1/D2 (PsbA/PsbD) reaction center heterodimer binds P680, the primary electron donor of PSII as well as several subsequent electron acceptors. The protein is Photosystem II protein D1 of Prochlorothrix hollandica.